We begin with the raw amino-acid sequence, 173 residues long: Crossover junction endodeoxyribonuclease RuvC (173 aa).

Active-site residues include Asp-8, Glu-67, and Asp-139. Residues Asp-8, Glu-67, and Asp-139 each contribute to the Mg(2+) site.

The protein belongs to the RuvC family. Homodimer which binds Holliday junction (HJ) DNA. The HJ becomes 2-fold symmetrical on binding to RuvC with unstacked arms; it has a different conformation from HJ DNA in complex with RuvA. In the full resolvosome a probable DNA-RuvA(4)-RuvB(12)-RuvC(2) complex forms which resolves the HJ. Mg(2+) is required as a cofactor.

Its subcellular location is the cytoplasm. It catalyses the reaction Endonucleolytic cleavage at a junction such as a reciprocal single-stranded crossover between two homologous DNA duplexes (Holliday junction).. Its function is as follows. The RuvA-RuvB-RuvC complex processes Holliday junction (HJ) DNA during genetic recombination and DNA repair. Endonuclease that resolves HJ intermediates. Cleaves cruciform DNA by making single-stranded nicks across the HJ at symmetrical positions within the homologous arms, yielding a 5'-phosphate and a 3'-hydroxyl group; requires a central core of homology in the junction. The consensus cleavage sequence is 5'-(A/T)TT(C/G)-3'. Cleavage occurs on the 3'-side of the TT dinucleotide at the point of strand exchange. HJ branch migration catalyzed by RuvA-RuvB allows RuvC to scan DNA until it finds its consensus sequence, where it cleaves and resolves the cruciform DNA. In Photobacterium profundum (strain SS9), this protein is Crossover junction endodeoxyribonuclease RuvC.